The following is a 430-amino-acid chain: Adenylosuccinate synthetase (430 aa).

GTP contacts are provided by residues 12 to 18 and 40 to 42; these read GDEGKGK and GHT. The active-site Proton acceptor is the D13. Residues D13 and G40 each coordinate Mg(2+). Residues 13 to 16, 38 to 41, T128, R142, Q223, T238, and R302 each bind IMP; these read DEGK and NAGH. The active-site Proton donor is the H41. 298 to 304 is a substrate binding site; sequence TTTGRPR. Residues R304, 330-332, and 412-414 each bind GTP; these read SID and SVG.

It belongs to the adenylosuccinate synthetase family. As to quaternary structure, homodimer. Mg(2+) is required as a cofactor.

It localises to the cytoplasm. It carries out the reaction IMP + L-aspartate + GTP = N(6)-(1,2-dicarboxyethyl)-AMP + GDP + phosphate + 2 H(+). It participates in purine metabolism; AMP biosynthesis via de novo pathway; AMP from IMP: step 1/2. Functionally, plays an important role in the de novo pathway of purine nucleotide biosynthesis. Catalyzes the first committed step in the biosynthesis of AMP from IMP. This chain is Adenylosuccinate synthetase, found in Streptococcus equi subsp. zooepidemicus (strain H70).